The chain runs to 225 residues: MGEPATDAWTGPMAWTGPMVVLVGAPGAGKTTVGTQLARRWGVGFRDTDADIEAALGTTVADIFLDHGEEYFRLAERRAVAAALADHRGVLALGGGAVLDAENRTLLAGHRVVYLEVGVSDAVRRVGLARDRPLLVEGPRTRLAALLRARRPLYAEVATVVIDTAGHEPDEVTDLLAAALGPLLAGGSEPDEAADAAGGSEPDEAADAAGGSEPDEAADAAGGKR.

27–32 is an ATP binding site; sequence GAGKTT. Thr31 is a binding site for Mg(2+). Positions 49, 73, and 95 each coordinate substrate. Residue Arg132 participates in ATP binding. Arg150 contacts substrate. Positions 186–225 are disordered; that stretch reads GGSEPDEAADAAGGSEPDEAADAAGGSEPDEAADAAGGKR.

Belongs to the shikimate kinase family. In terms of assembly, monomer. Requires Mg(2+) as cofactor.

The protein localises to the cytoplasm. It carries out the reaction shikimate + ATP = 3-phosphoshikimate + ADP + H(+). Its pathway is metabolic intermediate biosynthesis; chorismate biosynthesis; chorismate from D-erythrose 4-phosphate and phosphoenolpyruvate: step 5/7. Functionally, catalyzes the specific phosphorylation of the 3-hydroxyl group of shikimic acid using ATP as a cosubstrate. This is Shikimate kinase from Frankia casuarinae (strain DSM 45818 / CECT 9043 / HFP020203 / CcI3).